The following is a 619-amino-acid chain: Manganese lipoxygenase (619 aa).

An N-terminal signal peptide occupies residues 1–16 (MRVLVWIAGLAPLAVA). Asparagine 32, asparagine 42, asparagine 62, asparagine 86, asparagine 164, and asparagine 229 each carry an N-linked (GlcNAc...) asparagine glycan. Positions 55 to 619 (TLPCEDGNST…PGNIPFYLSV (565 aa)) constitute a Lipoxygenase domain. Histidine 298, histidine 303, histidine 483, and asparagine 487 together coordinate Mn(2+). Asparagine 515 and asparagine 549 each carry an N-linked (GlcNAc...) asparagine glycan. Residue valine 619 coordinates Mn(2+).

The protein belongs to the lipoxygenase family. Manganese lipoxygenase subfamily. The cofactor is Mn(2+).

The protein resides in the secreted. The catalysed reaction is (9Z,12Z)-octadecadienoate + O2 = (9S)-hydroperoxy-(10E,12Z)-octadecadienoate. The enzyme catalyses (9Z,12Z)-octadecadienoate + O2 = (11S)-hydroperoxy-(9Z,12Z)-octadecadienoate. It catalyses the reaction (9Z,12Z)-octadecadienoate + O2 = (13R)-hydroperoxy-(9Z,11E)-octadecadienoate. It carries out the reaction (9Z,12Z,15Z)-octadecatrienoate + O2 = (9S)-hydroperoxy-(10E,12Z,15Z)-octadecatrienoate. The catalysed reaction is (9Z,12Z,15Z)-octadecatrienoate + O2 = (11R)-hydroperoxy-(9Z,12Z,15Z)-octadecatrienoate. The enzyme catalyses (9Z,12Z,15Z)-octadecatrienoate + O2 = (13R)-hydroperoxy-(9Z,11E,15Z)-octadecatrienoate. It catalyses the reaction (9S)-hydroperoxy-(10E,12Z,15Z)-octadecatrienoate + O2 = (9S,16S)-dihydroperoxy-(10E,12Z,14E)-octadecatrienoate. Its function is as follows. Lipoxygenase that metabolizes linoleic and alpha-linolenic acids to 9S-, 11- and 13R-hydroperoxy fatty acids. At the end of lipoxygenation, the intermediate product 11S-HPODE from linoleic acid is then transformed into 9S-HPODE and 13R-HPODE as the final products. The intermediate product 11R-HPOTrE from alpha-linolenic acid is transformed into 9S-HPOTrE and 13R-HPOTrE as the final products. 9S-HPOTrE is further oxidized by the enzyme to 9S,16S-DiHPOTrE as the end product. The protein is Manganese lipoxygenase of Pyricularia oryzae (strain 70-15 / ATCC MYA-4617 / FGSC 8958) (Rice blast fungus).